A 127-amino-acid chain; its full sequence is MGFRKFSPFLALSILVLYQAGSLQAAPFRSALESSPDPATLSKEDARLLLAALVQDYVQMKASELKQEQETQGSSSAAQKRACNTATCVTHRLAGLLSRSGGMVKSNFVPTNVGSKAFGRRRRDLQA.

Positions 1–25 (MGFRKFSPFLALSILVLYQAGSLQA) are cleaved as a signal peptide. Positions 26 to 79 (APFRSALESSPDPATLSKEDARLLLAALVQDYVQMKASELKQEQETQGSSSAAQ) are excised as a propeptide. An intrachain disulfide couples Cys-83 to Cys-88. Phe-118 is subject to Phenylalanine amide. A propeptide spanning residues 124-127 (DLQA) is cleaved from the precursor.

This sequence belongs to the calcitonin family. Expressed in spinal cord, pituitary and thalamus.

The protein localises to the secreted. Its function is as follows. CALCB/CGRP2 is a peptide hormone that induces vasodilation mediated by the CALCRL-RAMP1 receptor complex. Dilates a variety of vessels including the coronary, cerebral and systemic vasculature. Its abundance in the CNS also points toward a neurotransmitter or neuromodulator role. The chain is Calcitonin gene-related peptide 2 from Homo sapiens (Human).